The primary structure comprises 202 residues: Dephospho-CoA kinase (202 aa).

A DPCK domain is found at 4 to 200 (VVGVTGGIGS…QRYLAATVAQ (197 aa)). Position 12–17 (12–17 (GSGKSA)) interacts with ATP.

Belongs to the CoaE family.

The protein resides in the cytoplasm. The catalysed reaction is 3'-dephospho-CoA + ATP = ADP + CoA + H(+). Its pathway is cofactor biosynthesis; coenzyme A biosynthesis; CoA from (R)-pantothenate: step 5/5. Functionally, catalyzes the phosphorylation of the 3'-hydroxyl group of dephosphocoenzyme A to form coenzyme A. The sequence is that of Dephospho-CoA kinase from Idiomarina loihiensis (strain ATCC BAA-735 / DSM 15497 / L2-TR).